The chain runs to 245 residues: tRNA1(Val) (adenine(37)-N6)-methyltransferase (245 aa).

This sequence belongs to the methyltransferase superfamily. tRNA (adenine-N(6)-)-methyltransferase family.

It is found in the cytoplasm. It catalyses the reaction adenosine(37) in tRNA1(Val) + S-adenosyl-L-methionine = N(6)-methyladenosine(37) in tRNA1(Val) + S-adenosyl-L-homocysteine + H(+). Functionally, specifically methylates the adenine in position 37 of tRNA(1)(Val) (anticodon cmo5UAC). The protein is tRNA1(Val) (adenine(37)-N6)-methyltransferase of Escherichia coli O157:H7.